The sequence spans 616 residues: Elongation factor 4 (616 aa).

Residues 17–203 enclose the tr-type G domain; it reads ERIRNFCIIA…RVCELVPAPV (187 aa). GTP contacts are provided by residues 29-34 and 150-153; these read DHGKST and NKID.

This sequence belongs to the TRAFAC class translation factor GTPase superfamily. Classic translation factor GTPase family. LepA subfamily.

Its subcellular location is the cell membrane. It catalyses the reaction GTP + H2O = GDP + phosphate + H(+). Its function is as follows. Required for accurate and efficient protein synthesis under certain stress conditions. May act as a fidelity factor of the translation reaction, by catalyzing a one-codon backward translocation of tRNAs on improperly translocated ribosomes. Back-translocation proceeds from a post-translocation (POST) complex to a pre-translocation (PRE) complex, thus giving elongation factor G a second chance to translocate the tRNAs correctly. Binds to ribosomes in a GTP-dependent manner. This is Elongation factor 4 from Corynebacterium jeikeium (strain K411).